We begin with the raw amino-acid sequence, 193 residues long: Auxin-responsive protein IAA23 (193 aa).

A compositionally biased stretch (polar residues) spans 1 to 12 (MSTSSGADSSPP). A disordered region spans residues 1–66 (MSTSSGADSS…SPKARAVGWP (66 aa)). Over residues 21–36 (TALTLALPGSSSSSSS) the composition is skewed to low complexity. An EAR-like (transcriptional repression) motif is present at residues 23–27 (LTLAL). Residues 39-53 (DPERKRAAHADHADA) are compositionally biased toward basic and acidic residues. Residues 83–191 (AKLVKVAVDG…EAVNLSPRRS (109 aa)) form the PB1 domain.

Belongs to the Aux/IAA family. As to quaternary structure, homodimers and heterodimers. As to expression, highly expressed in roots. Expressed in seedlings.

The protein resides in the nucleus. Its function is as follows. Aux/IAA proteins are short-lived transcriptional factors that function as repressors of early auxin response genes at low auxin concentrations. The chain is Auxin-responsive protein IAA23 (IAA23) from Oryza sativa subsp. japonica (Rice).